The primary structure comprises 192 residues: Rho-related protein racC (192 aa).

A GTP-binding site is contributed by 13 to 20; the sequence is GDGAVGKT. Residues 35–43 carry the Effector region motif; sequence YIPTVFDNY. GTP-binding positions include 60-64 and 118-121; these read DTAGQ and TKLD. A Cysteine methyl ester modification is found at cysteine 189. Cysteine 189 carries the S-geranylgeranyl cysteine lipid modification. Positions 190–192 are cleaved as a propeptide — removed in mature form; sequence IVM.

Belongs to the small GTPase superfamily. Rho family. Interacts with pakB.

It is found in the cell membrane. This is Rho-related protein racC (racC) from Dictyostelium discoideum (Social amoeba).